The primary structure comprises 333 residues: Glycerol-3-phosphate dehydrogenase [NAD(P)+] (333 aa).

Residues Trp-11, Arg-30, and Lys-105 each contribute to the NADPH site. Sn-glycerol 3-phosphate contacts are provided by Lys-105, Gly-133, and Ser-135. Ala-137 contacts NADPH. 5 residues coordinate sn-glycerol 3-phosphate: Lys-188, Asp-241, Ser-251, Arg-252, and Asn-253. Residue Lys-188 is the Proton acceptor of the active site. Arg-252 contributes to the NADPH binding site. 2 residues coordinate NADPH: Val-276 and Glu-278.

This sequence belongs to the NAD-dependent glycerol-3-phosphate dehydrogenase family.

It is found in the cytoplasm. It catalyses the reaction sn-glycerol 3-phosphate + NAD(+) = dihydroxyacetone phosphate + NADH + H(+). The enzyme catalyses sn-glycerol 3-phosphate + NADP(+) = dihydroxyacetone phosphate + NADPH + H(+). It participates in membrane lipid metabolism; glycerophospholipid metabolism. Catalyzes the reduction of the glycolytic intermediate dihydroxyacetone phosphate (DHAP) to sn-glycerol 3-phosphate (G3P), the key precursor for phospholipid synthesis. This chain is Glycerol-3-phosphate dehydrogenase [NAD(P)+], found in Methylibium petroleiphilum (strain ATCC BAA-1232 / LMG 22953 / PM1).